We begin with the raw amino-acid sequence, 962 residues long: Glutamate receptor 1 (962 aa).

Positions 1–25 are cleaved as a signal peptide; sequence MFSSFSFLNMFGVLFTVFNLTVVQP. Over 26 to 591 the chain is Extracellular; that stretch reads YPSHIIIKSF…SVFSFMQPLS (566 aa). Asparagine 190, asparagine 220, asparagine 275, asparagine 333, asparagine 441, and asparagine 482 each carry an N-linked (GlcNAc...) asparagine glycan. The chain crosses the membrane as a helical span at residues 592-612; that stretch reads TEIWMYIIFAYIGVSVVIFLV. The Cytoplasmic portion of the chain corresponds to 613 to 668; that stretch reads SRFSPYEWRVEETSRGGFTISNDFSVYNCLWFTLAAFMQQGTDILPRSISGRIASS. The chain crosses the membrane as a helical span at residues 669–689; it reads AWWFFTMIIVSSYTANLAAFL. At 690–855 the chain is on the extracellular side; it reads TLEKMQAPIE…GSSASLNLSK (166 aa). Asparagine 852 is a glycosylation site (N-linked (GlcNAc...) asparagine). The helical transmembrane segment at 856–876 threads the bilayer; the sequence is VAGIFYILMGGMVISMLAALG. The Cytoplasmic segment spans residues 877 to 962; it reads EFLYRSRIEA…PANTLYNTAV (86 aa).

Belongs to the glutamate-gated ion channel (TC 1.A.10.1) family. In terms of assembly, interacts with sol-1. Interacts with cni-1; the interaction negatively regulates export of glr-1 from the endoplasmic reticulum to synapses. Interacts with usp-46; the interaction results in deubiquitination of glr-1. Ubiquitinated. Deubiquitinated by usp-46 which prevents its degradation. In terms of processing, glycosylated. Command interneurons of the locomotory control circuit (AIB, AVA, AVB, AVD, AVE and PVC) and motor neurons (RMD, RIM, SMD, AVG, PVQ and URY).

It localises to the postsynaptic cell membrane. Its subcellular location is the endoplasmic reticulum. It is found in the synapse. The protein resides in the cell membrane. The protein localises to the recycling endosome. It localises to the cell projection. Its subcellular location is the dendrite. It is found in the perikaryon. Functionally, non-NMDA (N-methyl-D-aspartate) ionotropic glutamate receptor. L-glutamate acts as an excitatory neurotransmitter at many synapses in the central nervous system. The postsynaptic actions of glutamate are mediated by a variety of receptors that are named according to their selective agonists. May contribute to a sensory discrimination between mechanical and chemical stimuli. Plays a role in controlling movement in response to environmental cues such as food availability and mechanosensory stimulation such as the nose touch response. In AIB interneurons, promotes omega turns, a movement that frequently follows backwards locomotion or 'reversals' in response to environmental cues while possibly playing an inhibitory role in alternative neurons to inhibit omega turns. The polypeptide is Glutamate receptor 1 (Caenorhabditis elegans).